A 158-amino-acid polypeptide reads, in one-letter code: Small ribosomal subunit protein uS19 (158 aa).

It belongs to the universal ribosomal protein uS19 family.

In terms of biological role, protein S19 forms a complex with S13 that binds strongly to the 16S ribosomal RNA. The polypeptide is Small ribosomal subunit protein uS19 (Pyrobaculum aerophilum (strain ATCC 51768 / DSM 7523 / JCM 9630 / CIP 104966 / NBRC 100827 / IM2)).